Here is a 391-residue protein sequence, read N- to C-terminus: MSESNSTGILPPAAQVPLAFLMSSFAFAIMVGNAVVILAFVVDRNLRHRSNYFFLNLAISDFLVGLISIPLYIPHVLFNWNFGSGICMFWLITDYLLCTASVYNIVLISYDRYQSVSNAVSYRAQHTGIMKIVAQMVAVWILAFLVNGPMILASDSWKNSTNTKDCEPGFVTEWYILTITMLLEFLLPVISVAYFNVQIYWSLWKRRALSRCPSHAGFSTTSSSASGHLHRAGVACRTSNPGLKESAASRHSESPRRKSSILVSLRTHMNSSITAFKVGSFWRSESAALRQREYAELLRGRKLARSLAILLSAFAICWAPYCLFTIVLSTYPRTERPKSVWYSIAFWLQWFNSFVNPFLYPLCHRRFQKAFWKILCVTKQPALSQNQSVSS.

Topologically, residues 1-19 (MSESNSTGILPPAAQVPLA) are extracellular. N5 carries an N-linked (GlcNAc...) asparagine glycan. Residues 20 to 40 (FLMSSFAFAIMVGNAVVILAF) traverse the membrane as a helical segment. At 41–52 (VVDRNLRHRSNY) the chain is on the cytoplasmic side. A helical transmembrane segment spans residues 53-73 (FFLNLAISDFLVGLISIPLYI). Residues 74 to 87 (PHVLFNWNFGSGIC) lie on the Extracellular side of the membrane. C87 and C166 are oxidised to a cystine. The helical transmembrane segment at 88–108 (MFWLITDYLLCTASVYNIVLI) threads the bilayer. Topologically, residues 109–131 (SYDRYQSVSNAVSYRAQHTGIMK) are cytoplasmic. A helical membrane pass occupies residues 132 to 152 (IVAQMVAVWILAFLVNGPMIL). Residues 153-174 (ASDSWKNSTNTKDCEPGFVTEW) are Extracellular-facing. N159 carries an N-linked (GlcNAc...) asparagine glycan. A helical transmembrane segment spans residues 175-195 (YILTITMLLEFLLPVISVAYF). Topologically, residues 196 to 306 (NVQIYWSLWK…LLRGRKLARS (111 aa)) are cytoplasmic. The segment at 238–258 (TSNPGLKESAASRHSESPRRK) is disordered. Positions 247-256 (AASRHSESPR) are enriched in basic and acidic residues. Residues 307 to 327 (LAILLSAFAICWAPYCLFTIV) form a helical membrane-spanning segment. Topologically, residues 328-343 (LSTYPRTERPKSVWYS) are extracellular. Residues 344 to 364 (IAFWLQWFNSFVNPFLYPLCH) form a helical membrane-spanning segment. The Cytoplasmic segment spans residues 365-391 (RRFQKAFWKILCVTKQPALSQNQSVSS).

The protein belongs to the G-protein coupled receptor 1 family. As to quaternary structure, interacts with TSPAN4.

Its subcellular location is the cell membrane. Its function is as follows. The H4 subclass of histamine receptors could mediate the histamine signals in peripheral tissues. Displays a significant level of constitutive activity (spontaneous activity in the absence of agonist). In Mus musculus (Mouse), this protein is Histamine H4 receptor (Hrh4).